Consider the following 351-residue polypeptide: MYSLARPFLFSLDAERAHGLGLSALDLAYRTGTTPLLAARIAPMPSTVFGLTFPNPVGLAAGLDKNGEHIDALFALGFGFVEIGTITPRPQAGNPQPRLFRLPEHNAIINRMGFNNAGVDALVRNVERARNRRGLLGINIGKNKDTPNEQAVDDYIACLDKVYPLADYITVNISSPNTAGLRELQEETALRQLVSQLRDRQEDLAARHGRRVPMLVKVAPDLSDRDIDAAARVLGELQVDGVIATNTTIDHSKVAGDPLANEAGGLSGAPVLEQSTLVLRRLRSRLPESVPLVGVGGILSGADAVAKMAAGAALVQCYSGLIFRGPALVSECVEAIRRRREAPSRGAVAPL.

Residues 61 to 65 (AGLDK) and threonine 85 each bind FMN. Lysine 65 serves as a coordination point for substrate. 110 to 114 (NRMGF) provides a ligand contact to substrate. Residues asparagine 139 and asparagine 172 each contribute to the FMN site. Asparagine 172 serves as a coordination point for substrate. The active-site Nucleophile is serine 175. Residue asparagine 177 participates in substrate binding. Residues lysine 217 and threonine 245 each contribute to the FMN site. Residue 246–247 (NT) coordinates substrate. FMN is bound by residues glycine 268, glycine 297, and 318 to 319 (YS).

It belongs to the dihydroorotate dehydrogenase family. Type 2 subfamily. Monomer. The cofactor is FMN.

It localises to the cell membrane. It carries out the reaction (S)-dihydroorotate + a quinone = orotate + a quinol. It functions in the pathway pyrimidine metabolism; UMP biosynthesis via de novo pathway; orotate from (S)-dihydroorotate (quinone route): step 1/1. Catalyzes the conversion of dihydroorotate to orotate with quinone as electron acceptor. In Stenotrophomonas maltophilia (strain K279a), this protein is Dihydroorotate dehydrogenase (quinone).